A 53-amino-acid polypeptide reads, in one-letter code: VQAVPPDVKGEEGKEEVEDMDGDDNAPTVAAFAILFILSFLYSTFVTVVKVQQ.

The tract at residues 1-25 is disordered; it reads VQAVPPDVKGEEGKEEVEDMDGDDN. Acidic residues predominate over residues 13 to 24; it reads GKEEVEDMDGDD. The chain crosses the membrane as a helical span at residues 29-49; the sequence is VAAFAILFILSFLYSTFVTVV.

Expressed in the spleen, pancreas, peripheral blood lymphocytes and at low levels in the epigonal organ.

Its subcellular location is the membrane. The protein is IgW transmembrane form Tm1T3/Tm6T3/Tm3C4 of Ginglymostoma cirratum (Nurse shark).